A 348-amino-acid chain; its full sequence is Protein RecA (348 aa).

64 to 71 (GPESSGKT) serves as a coordination point for ATP. Positions 325-335 (YEIDGSNKEPL) are enriched in basic and acidic residues. The interval 325 to 348 (YEIDGSNKEPLDEGEETLSLLDDE) is disordered. The span at 336–348 (DEGEETLSLLDDE) shows a compositional bias: acidic residues.

The protein belongs to the RecA family.

It is found in the cytoplasm. Can catalyze the hydrolysis of ATP in the presence of single-stranded DNA, the ATP-dependent uptake of single-stranded DNA by duplex DNA, and the ATP-dependent hybridization of homologous single-stranded DNAs. It interacts with LexA causing its activation and leading to its autocatalytic cleavage. This is Protein RecA from Listeria monocytogenes serotype 4b (strain CLIP80459).